We begin with the raw amino-acid sequence, 196 residues long: ATP-dependent Clp protease proteolytic subunit (196 aa).

Catalysis depends on Ser-101, which acts as the Nucleophile. His-126 is an active-site residue.

It belongs to the peptidase S14 family. In terms of assembly, component of the chloroplastic Clp protease core complex.

The protein resides in the plastid. The protein localises to the chloroplast stroma. The catalysed reaction is Hydrolysis of proteins to small peptides in the presence of ATP and magnesium. alpha-casein is the usual test substrate. In the absence of ATP, only oligopeptides shorter than five residues are hydrolyzed (such as succinyl-Leu-Tyr-|-NHMec, and Leu-Tyr-Leu-|-Tyr-Trp, in which cleavage of the -Tyr-|-Leu- and -Tyr-|-Trp bonds also occurs).. Functionally, cleaves peptides in various proteins in a process that requires ATP hydrolysis. Has a chymotrypsin-like activity. Plays a major role in the degradation of misfolded proteins. The chain is ATP-dependent Clp protease proteolytic subunit from Nasturtium officinale (Watercress).